A 130-amino-acid polypeptide reads, in one-letter code: Insulin-like growth factor 1 (130 aa).

The first 25 residues, 1 to 25, serve as a signal peptide directing secretion; sequence MHAVSSSHLFYLAFCLLVLTSSATA. The b stretch occupies residues 26-54; the sequence is GPETLCGAELVDALQFVCGDRGFYFNKPT. 3 disulfide bridges follow: C31–C73, C43–C86, and C72–C77. A c region spans residues 55-66; it reads GYGSSSRRAPQT. Positions 67-87 are a; that stretch reads GIVDECCFRSCDLRRLEMYCA. The segment at 88–95 is d; it reads PLKPAKSA. Residues 96-130 constitute a propeptide, e peptide; it reads RSVRAQRHTDMPKTQKEVHLKNASRGSAGNKNYRM. The interval 97-130 is disordered; the sequence is SVRAQRHTDMPKTQKEVHLKNASRGSAGNKNYRM. Residues 102 to 115 show a composition bias toward basic and acidic residues; that stretch reads RHTDMPKTQKEVHL. The span at 119–130 shows a compositional bias: polar residues; that stretch reads SRGSAGNKNYRM.

Belongs to the insulin family. As to quaternary structure, forms a ternary complex with IGFR1 and ITGAV:ITGB3. Forms a ternary complex with IGFR1 and ITGA6:ITGB4. Forms a ternary complex with IGFBP3 and ALS.

The protein localises to the secreted. Its function is as follows. The insulin-like growth factors, isolated from plasma, are structurally and functionally related to insulin but have a much higher growth-promoting activity. May be a physiological regulator of [1-14C]-2-deoxy-D-glucose (2DG) transport and glycogen synthesis in osteoblasts. Stimulates glucose transport in bone-derived osteoblastic (PyMS) cells and is effective at much lower concentrations than insulin, not only regarding glycogen and DNA synthesis but also with regard to enhancing glucose uptake. May play a role in synapse maturation. Ca(2+)-dependent exocytosis of IGF1 is required for sensory perception of smell in the olfactory bulb. Acts as a ligand for IGF1R. Binds to the alpha subunit of IGF1R, leading to the activation of the intrinsic tyrosine kinase activity which autophosphorylates tyrosine residues in the beta subunit thus initiating a cascade of down-stream signaling events leading to activation of the PI3K-AKT/PKB and the Ras-MAPK pathways. Binds to integrins ITGAV:ITGB3 and ITGA6:ITGB4. Its binding to integrins and subsequent ternary complex formation with integrins and IGFR1 are essential for IGF1 signaling. Induces the phosphorylation and activation of IGFR1, MAPK3/ERK1, MAPK1/ERK2 and AKT1. As part of the MAPK/ERK signaling pathway, acts as a negative regulator of apoptosis in cardiomyocytes via promotion of STUB1/CHIP-mediated ubiquitination and degradation of ICER-type isoforms of CREM. The polypeptide is Insulin-like growth factor 1 (Cavia porcellus (Guinea pig)).